The following is a 447-amino-acid chain: Dual specificity protein phosphatase CDC14C (447 aa).

Residues 14 to 168 (PQDDVYVDIT…AMQYGFLNFN (155 aa)) are a. Positions 169 to 182 (SFNLDEYEHYEKAE) are linker. The interval 183–349 (NGDLNWIIPD…EGDYFRQRLK (167 aa)) is b. The region spanning 184–344 (GDLNWIIPDR…TSLWLEGDYF (161 aa)) is the Tyrosine-protein phosphatase domain. Cys284 acts as the Phosphocysteine intermediate in catalysis. A helical membrane pass occupies residues 426–446 (FTLCSVVIWWIVCDYILPILL).

Belongs to the protein-tyrosine phosphatase family. Non-receptor class CDC14 subfamily.

It is found in the endoplasmic reticulum membrane. The enzyme catalyses O-phospho-L-tyrosyl-[protein] + H2O = L-tyrosyl-[protein] + phosphate. The catalysed reaction is O-phospho-L-seryl-[protein] + H2O = L-seryl-[protein] + phosphate. It catalyses the reaction O-phospho-L-threonyl-[protein] + H2O = L-threonyl-[protein] + phosphate. Dual-specificity phosphatase. Preferentially dephosphorylates proteins modified by proline-directed kinases. The polypeptide is Dual specificity protein phosphatase CDC14C (Homo sapiens (Human)).